Consider the following 295-residue polypeptide: MPSGSVLMAADDGFHGPTPDVFKPKSWFEFDLGPIDFYFNKWSALTLFVALFVGGFLWLGFRKATLVPRGLQNFCESIYDFVDLQIAQNVIGERGRTFSPYLTILFCFILVSNVMAVIPVAQFPTTSRIALPMILAAVSWFIFNIVGIREHGAGTYFKDMLVPAPTAPLFVKVILAPIEFVSTMIARPATLAIRLFANMFAGHMLLLVFALGADYLLPKPQFVFGLVSGLMAIALTLFELMIDVLQAYIFTVLTAAYIGGAISSHGGGDHAADHSPIHGHETSAPVTAAGAVARA.

A run of 7 helical transmembrane segments spans residues 41–61, 101–121, 129–149, 161–181, 191–211, 222–242, and 244–264; these read KWSA…WLGF, YLTI…IPVA, IALP…VGIR, LVPA…IEFV, LAIR…VFAL, FVFG…ELMI, and VLQA…AISS.

Belongs to the ATPase A chain family. As to quaternary structure, F-type ATPases have 2 components, CF(1) - the catalytic core - and CF(0) - the membrane proton channel. CF(1) has five subunits: alpha(3), beta(3), gamma(1), delta(1), epsilon(1). CF(0) has three main subunits: a(1), b(2) and c(9-12). The alpha and beta chains form an alternating ring which encloses part of the gamma chain. CF(1) is attached to CF(0) by a central stalk formed by the gamma and epsilon chains, while a peripheral stalk is formed by the delta and b chains.

It is found in the cell membrane. In terms of biological role, key component of the proton channel; it plays a direct role in the translocation of protons across the membrane. The sequence is that of ATP synthase subunit a from Parafrankia sp. (strain EAN1pec).